The following is a 501-amino-acid chain: ATP synthase subunit alpha (501 aa).

ATP is bound at residue 169-176 (GDRQTGKT).

The protein belongs to the ATPase alpha/beta chains family. In terms of assembly, F-type ATPases have 2 components, CF(1) - the catalytic core - and CF(0) - the membrane proton channel. CF(1) has five subunits: alpha(3), beta(3), gamma(1), delta(1), epsilon(1). CF(0) has three main subunits: a(1), b(2) and c(9-12). The alpha and beta chains form an alternating ring which encloses part of the gamma chain. CF(1) is attached to CF(0) by a central stalk formed by the gamma and epsilon chains, while a peripheral stalk is formed by the delta and b chains.

It is found in the cell inner membrane. It catalyses the reaction ATP + H2O + 4 H(+)(in) = ADP + phosphate + 5 H(+)(out). Produces ATP from ADP in the presence of a proton gradient across the membrane. The alpha chain is a regulatory subunit. In Campylobacter jejuni subsp. jejuni serotype O:23/36 (strain 81-176), this protein is ATP synthase subunit alpha.